The sequence spans 423 residues: Glycine amidinotransferase, mitochondrial (423 aa).

Residues 1–43 (MLRVRCLRGGSRGAEAVHYIGSRLGRTLTGWVQRTFQSTQAAT) constitute a mitochondrion transit peptide. The segment at 43-63 (TASSRNSFAADDKATEPLPKD) is disordered. A phosphoserine mark is found at serine 46 and serine 49. Over residues 52 to 61 (ADDKATEPLP) the composition is skewed to basic and acidic residues. Arginine is bound at residue aspartate 170. Residues aspartate 254 and histidine 303 contribute to the active site. Aspartate 305, arginine 322, serine 354, and serine 355 together coordinate arginine. The residue at position 385 (lysine 385) is an N6-acetyllysine. The active-site Amidino-cysteine intermediate is the cysteine 407.

It belongs to the amidinotransferase family. In terms of assembly, homodimer.

It localises to the mitochondrion inner membrane. It catalyses the reaction L-arginine + glycine = guanidinoacetate + L-ornithine. The catalysed reaction is 4-aminobutanoate + L-arginine = 4-guanidinobutanoate + L-ornithine. It carries out the reaction beta-alanine + L-arginine = 3-guanidinopropanoate + L-ornithine. The enzyme catalyses taurine + L-arginine = taurocyamine + L-ornithine. The protein operates within amine and polyamine biosynthesis; creatine biosynthesis; creatine from L-arginine and glycine: step 1/2. Its function is as follows. Transamidinase that catalyzes the transfer of the amidino group of L-arginine onto the amino moiety of acceptor metabolites such as glycine, beta-alanine, gamma-aminobutyric acid (GABA) and taurine yielding the corresponding guanidine derivatives. Catalyzes the rate-limiting step of creatine biosynthesis, namely the transfer of the amidino group from L-arginine to glycine to generate guanidinoacetate, which is then methylated by GAMT to form creatine. Provides creatine as a source for ATP generation in tissues with high energy demands, in particular skeletal muscle, heart and brain. This chain is Glycine amidinotransferase, mitochondrial (GATM), found in Macaca fascicularis (Crab-eating macaque).